The sequence spans 116 residues: Chaperone protein SicP (116 aa).

Belongs to the SicP family.

Its subcellular location is the cytoplasm. Its function is as follows. Molecular chaperone required for SptP stabilization and secretion. The protein is Chaperone protein SicP (sicP) of Salmonella paratyphi A (strain ATCC 9150 / SARB42).